A 129-amino-acid polypeptide reads, in one-letter code: Omega-scoloptoxin(05)-Ssm1a (129 aa).

A signal peptide spans 1–24 (MPSLCIIALFGTLTFYTLIPSIHT). Residues 25 to 46 (LKCVRCDGPMSNYDCKTTYPAA) constitute a propeptide that is removed on maturation.

Belongs to the scoloptoxin-05 family. Post-translationally, contains 3 disulfide bonds. Expressed by the venom gland.

The protein resides in the secreted. In terms of biological role, toxin that increase voltage-gated calcium channel (Cav) currents in DRG neurons by 70% and 120%, when 1 uM and 10 uM are tested, respectively. The sequence is that of Omega-scoloptoxin(05)-Ssm1a from Scolopendra mutilans (Chinese red-headed centipede).